A 265-amino-acid chain; its full sequence is Transcriptional repressor DcmR (265 aa).

The H-T-H motif DNA-binding region spans 17-36 (LDIKQAASLLNVSEASLRRW).

Monomer.

In terms of biological role, transcriptional repressor of the dcmA gene and of its own gene. The sequence is that of Transcriptional repressor DcmR (dcmR) from Methylorubrum extorquens (strain DSM 6343 / CIP 106787 / DM4) (Methylobacterium extorquens).